The following is a 231-amino-acid chain: Ribonuclease 3 (231 aa).

The RNase III domain maps to 6-135 (AAMLKERFGI…FVGALYLDQG (130 aa)). Glu48 serves as a coordination point for Mg(2+). Asp52 is an active-site residue. 2 residues coordinate Mg(2+): Asp121 and Glu124. The active site involves Glu124. The DRBM domain maps to 161 to 230 (DYKTTLQEYL…ARQAYSQLQQ (70 aa)). The interval 209-231 (WGHSKKEAEQSAARQAYSQLQQK) is disordered. A compositionally biased stretch (polar residues) spans 220 to 231 (AARQAYSQLQQK).

This sequence belongs to the ribonuclease III family. In terms of assembly, homodimer. Requires Mg(2+) as cofactor.

It is found in the cytoplasm. The enzyme catalyses Endonucleolytic cleavage to 5'-phosphomonoester.. In terms of biological role, digests double-stranded RNA. Involved in the processing of primary rRNA transcript to yield the immediate precursors to the large and small rRNAs (23S and 16S). Processes some mRNAs, and tRNAs when they are encoded in the rRNA operon. Processes pre-crRNA and tracrRNA of type II CRISPR loci if present in the organism. This Lactiplantibacillus plantarum (strain ATCC BAA-793 / NCIMB 8826 / WCFS1) (Lactobacillus plantarum) protein is Ribonuclease 3.